A 506-amino-acid polypeptide reads, in one-letter code: D-alanine--D-alanyl carrier protein ligase (506 aa).

Residue 152-153 (TS) coordinates ATP. Position 197 (Asp197) interacts with D-alanine. 292–297 (NTYGPT) lines the ATP pocket. Val301 contacts D-alanine. ATP contacts are provided by residues Asp383, 395–398 (YRGR), and Lys494. Residue Lys494 coordinates D-alanine.

The protein belongs to the ATP-dependent AMP-binding enzyme family. DltA subfamily.

The protein resides in the cytoplasm. The catalysed reaction is holo-[D-alanyl-carrier protein] + D-alanine + ATP = D-alanyl-[D-alanyl-carrier protein] + AMP + diphosphate. It participates in cell wall biogenesis; lipoteichoic acid biosynthesis. Functionally, catalyzes the first step in the D-alanylation of lipoteichoic acid (LTA), the activation of D-alanine and its transfer onto the D-alanyl carrier protein (Dcp) DltC. In an ATP-dependent two-step reaction, forms a high energy D-alanyl-AMP intermediate, followed by transfer of the D-alanyl residue as a thiol ester to the phosphopantheinyl prosthetic group of the Dcp. D-alanylation of LTA plays an important role in modulating the properties of the cell wall in Gram-positive bacteria, influencing the net charge of the cell wall. The chain is D-alanine--D-alanyl carrier protein ligase from Lacticaseibacillus casei (strain BL23) (Lactobacillus casei).